A 262-amino-acid chain; its full sequence is MENSFKAALKAGRPQIGLWLGLSSSYSAELLAGAGFDWLLIDGEHAPNNVQTVLTQLQAIAPYPSQPVVRPSWNDPVQIKQLLDVGTQTLLVPMVQNADEAREAVRATRYPPAGIRGVGSALARASRWNRIPDYLQKANDQMCVLVQIETREAMKNLPQILDVEGVDGVFIGPADLSADMGYAGNPQHPEVQAAIEQAIVQIRESGKAPGILIANEQLAKRYLELGALFVAVGVDTTLLARAAEALAARFGAQATAVKPGVY.

His-45 acts as the Proton acceptor in catalysis. Gln-147 contacts substrate. Residue Glu-149 coordinates a divalent metal cation. Substrate-binding residues include Ala-174 and Asp-175. Asp-175 serves as a coordination point for a divalent metal cation.

This sequence belongs to the HpcH/HpaI aldolase family. Homohexamer; trimer of dimers. The cofactor is a divalent metal cation.

It catalyses the reaction 4-hydroxy-2-oxoheptanedioate = succinate semialdehyde + pyruvate. It carries out the reaction D-glyceraldehyde + 3-hydroxypyruvate = (3R,4S,5R)-3,4,5,6-tetrahydroxy-2-oxohexanoate. The enzyme catalyses D-glyceraldehyde + 3-hydroxypyruvate = 2-dehydro-D-gluconate. The catalysed reaction is D-glyceraldehyde + 3-hydroxypyruvate = 2-dehydro-D-galactonate. It catalyses the reaction D-glyceraldehyde + pyruvate = 2-dehydro-3-deoxy-L-galactonate. It carries out the reaction 2-dehydro-3-deoxy-D-gluconate = D-glyceraldehyde + pyruvate. The protein operates within aromatic compound metabolism; 4-hydroxyphenylacetate degradation; pyruvate and succinate semialdehyde from 4-hydroxyphenylacetate: step 7/7. In terms of biological role, catalyzes the reversible retro-aldol cleavage of 4-hydroxy-2-ketoheptane-1,7-dioate (HKHD) to pyruvate and succinic semialdehyde. In vitro, can catalyze the aldolisation reaction between hydroxypyruvate (HPA) or pyruvate (PA) and D-glyceraldehyde (D-GA). The condensation of hydroxypyruvate and D-glyceraldehyde produces (3R,4S,5R)-3,4,5,6-tetrahydroxy-2-oxohexanoate as the major product, 2-dehydro-D-gluconate and 2-dehydro-D-galactonate. The condensation of pyruvate and D-glyceraldehyde produces 2-dehydro-3-deoxy-L-galactonate as the major product and 2-dehydro-3-deoxy-D-gluconate. The chain is 4-hydroxy-2-oxo-heptane-1,7-dioate aldolase from Escherichia coli (strain ATCC 8739 / DSM 1576 / NBRC 3972 / NCIMB 8545 / WDCM 00012 / Crooks).